The chain runs to 198 residues: Urease accessory protein UreE (198 aa).

The disordered stretch occupies residues alanine 137–aspartate 198. A compositionally biased stretch (basic and acidic residues) spans histidine 149 to aspartate 198.

Belongs to the UreE family.

Its subcellular location is the cytoplasm. Involved in urease metallocenter assembly. Binds nickel. Probably functions as a nickel donor during metallocenter assembly. The chain is Urease accessory protein UreE from Rhizobium johnstonii (strain DSM 114642 / LMG 32736 / 3841) (Rhizobium leguminosarum bv. viciae).